The sequence spans 118 residues: MARIAGINIPDQKHAVIALTSIYGVGKTRSKAILAAAGIAENVKISELSEEQIDTLRDEVAKFVVEGDLRREISMSIKRLMDLGCYRGLRHRRGLPVRGQRTKTNARTRKGPCKPIKK.

A disordered region spans residues 94–118 (GLPVRGQRTKTNARTRKGPCKPIKK).

Belongs to the universal ribosomal protein uS13 family. Part of the 30S ribosomal subunit. Forms a loose heterodimer with protein S19. Forms two bridges to the 50S subunit in the 70S ribosome.

Its function is as follows. Located at the top of the head of the 30S subunit, it contacts several helices of the 16S rRNA. In the 70S ribosome it contacts the 23S rRNA (bridge B1a) and protein L5 of the 50S subunit (bridge B1b), connecting the 2 subunits; these bridges are implicated in subunit movement. Contacts the tRNAs in the A and P-sites. The sequence is that of Small ribosomal subunit protein uS13 from Salmonella typhi.